The following is a 167-amino-acid chain: 2-C-methyl-D-erythritol 2,4-cyclodiphosphate synthase (167 aa).

Residues D11 and H13 each coordinate a divalent metal cation. Residues 11 to 13 (DIH) and 37 to 38 (HS) each bind 4-CDP-2-C-methyl-D-erythritol 2-phosphate. A divalent metal cation is bound at residue H45. 4-CDP-2-C-methyl-D-erythritol 2-phosphate is bound by residues 59–61 (DIG), 64–68 (FSDTD), 103–109 (AQAPKMA), and R145.

This sequence belongs to the IspF family. As to quaternary structure, homotrimer. A divalent metal cation is required as a cofactor.

The catalysed reaction is 4-CDP-2-C-methyl-D-erythritol 2-phosphate = 2-C-methyl-D-erythritol 2,4-cyclic diphosphate + CMP. It functions in the pathway isoprenoid biosynthesis; isopentenyl diphosphate biosynthesis via DXP pathway; isopentenyl diphosphate from 1-deoxy-D-xylulose 5-phosphate: step 4/6. Functionally, involved in the biosynthesis of isopentenyl diphosphate (IPP) and dimethylallyl diphosphate (DMAPP), two major building blocks of isoprenoid compounds. Catalyzes the conversion of 4-diphosphocytidyl-2-C-methyl-D-erythritol 2-phosphate (CDP-ME2P) to 2-C-methyl-D-erythritol 2,4-cyclodiphosphate (ME-CPP) with a corresponding release of cytidine 5-monophosphate (CMP). The polypeptide is 2-C-methyl-D-erythritol 2,4-cyclodiphosphate synthase (Nitrosomonas eutropha (strain DSM 101675 / C91 / Nm57)).